The primary structure comprises 489 residues: Lysine--tRNA ligase (489 aa).

Residues glutamate 399 and glutamate 406 each contribute to the Mg(2+) site.

This sequence belongs to the class-II aminoacyl-tRNA synthetase family. In terms of assembly, homodimer. The cofactor is Mg(2+).

It localises to the cytoplasm. The catalysed reaction is tRNA(Lys) + L-lysine + ATP = L-lysyl-tRNA(Lys) + AMP + diphosphate. The protein is Lysine--tRNA ligase of Synechococcus sp. (strain CC9311).